A 310-amino-acid polypeptide reads, in one-letter code: GPN-loop GTPase 2 (310 aa).

Alanine 2 bears the N-acetylalanine mark. GTP is bound at residue 19–24; that stretch reads GSGKTT. A Gly-Pro-Asn (GPN)-loop; involved in dimer interface motif is present at residues 76–78; that stretch reads GPN. 178-181 contacts GTP; it reads SKMD.

It belongs to the GPN-loop GTPase family. Heterodimers with GPN1 or GPN3. Binds to RNA polymerase II (RNAPII).

Its function is as follows. Small GTPase required for proper localization of RNA polymerase II and III (RNAPII and RNAPIII). May act at an RNAP assembly step prior to nuclear import. The protein is GPN-loop GTPase 2 of Mus musculus (Mouse).